Here is a 453-residue protein sequence, read N- to C-terminus: Glutamyl-tRNA reductase (453 aa).

Substrate is bound by residues threonine 52 to arginine 55, serine 105, glutamate 110 to glutamine 112, and glutamine 116. The active-site Nucleophile is cysteine 53. An NADP(+)-binding site is contributed by glycine 184–alanine 189. Positions proline 413 to threonine 424 are enriched in low complexity. The interval proline 413 to aspartate 453 is disordered.

This sequence belongs to the glutamyl-tRNA reductase family. In terms of assembly, homodimer.

The catalysed reaction is (S)-4-amino-5-oxopentanoate + tRNA(Glu) + NADP(+) = L-glutamyl-tRNA(Glu) + NADPH + H(+). It functions in the pathway porphyrin-containing compound metabolism; protoporphyrin-IX biosynthesis; 5-aminolevulinate from L-glutamyl-tRNA(Glu): step 1/2. Its function is as follows. Catalyzes the NADPH-dependent reduction of glutamyl-tRNA(Glu) to glutamate 1-semialdehyde (GSA). The chain is Glutamyl-tRNA reductase from Natronomonas pharaonis (strain ATCC 35678 / DSM 2160 / CIP 103997 / JCM 8858 / NBRC 14720 / NCIMB 2260 / Gabara) (Halobacterium pharaonis).